The sequence spans 449 residues: N-succinylarginine dihydrolase (449 aa).

Substrate is bound by residues 19 to 28 (GGLSYGNVAS), asparagine 110, and 137 to 138 (HR). The interval 23–43 (YGNVASQSNSQQGSNPREAAR) is disordered. Polar residues predominate over residues 25–37 (NVASQSNSQQGSN). The active site involves glutamate 174. Arginine 214 serves as a coordination point for substrate. Residue histidine 250 is part of the active site. Residues aspartate 252 and asparagine 365 each coordinate substrate. The active-site Nucleophile is cysteine 371.

It belongs to the succinylarginine dihydrolase family. Homodimer.

The enzyme catalyses N(2)-succinyl-L-arginine + 2 H2O + 2 H(+) = N(2)-succinyl-L-ornithine + 2 NH4(+) + CO2. It functions in the pathway amino-acid degradation; L-arginine degradation via AST pathway; L-glutamate and succinate from L-arginine: step 2/5. In terms of biological role, catalyzes the hydrolysis of N(2)-succinylarginine into N(2)-succinylornithine, ammonia and CO(2). The protein is N-succinylarginine dihydrolase of Pseudomonas entomophila (strain L48).